A 1507-amino-acid chain; its full sequence is Paired amphipathic helix protein sin-3 (1507 aa).

5 disordered regions span residues 1 to 26 (MYNP…TNNA), 228 to 286 (PLAL…PPRV), 397 to 450 (ELGS…MMEE), 543 to 569 (VDDV…DSSK), and 1349 to 1434 (IPRE…MDHL). The segment covering 16–26 (DQSQQQPTNNA) has biased composition (polar residues). Residues 270–279 (RQNRPGRRKK) show a composition bias toward basic residues. The PAH domain maps to 282-352 (GPPRVDEALA…LGFNTFLPTG (71 aa)). Over residues 427 to 438 (DGIDDEDDEESG) the composition is skewed to acidic residues. 2 stretches are compositionally biased toward basic and acidic residues: residues 439–450 (IEDKNNEEMMEE) and 555–568 (EIKK…KDSS). 3 stretches are compositionally biased toward acidic residues: residues 1354-1365 (KDDDDDDDEEGN), 1373-1382 (NVKDEDDGGD), and 1389-1421 (PDDD…DEPE).

Component of the SIN3S complex, which contains at least sin-3, hda-1, athp-1 and mrg-1. Interacts with ztf-11; the interaction is weak. Interacts with cfp-1. In terms of tissue distribution, expressed in all ray structural cells including ray 6, 7, 8 and 9 of the male tail. Also expressed in the inner labial neurons, socket cells, the cephalic neurons in the head and the ventral nerve cord.

It localises to the nucleus. Functionally, probable transcriptional repressor required for the deposition of dimethylated 'Lys-9' of histone H3 (H3K9me2) on asynapsed chromosome pairs (both autosomes and sex chromosomes) during meiosis, but this does not seem to solely affect the transcriptional status. Plays a role in ray fusion and patterning in the male tail, and this may be through activity of the histone deacetylase complex (HDAC). This Caenorhabditis elegans protein is Paired amphipathic helix protein sin-3.